Consider the following 260-residue polypeptide: NH(3)-dependent NAD(+) synthetase (260 aa).

Residue 31-38 participates in ATP binding; that stretch reads GLSGGLDS. Residue D37 participates in Mg(2+) binding. Position 112 (R112) interacts with deamido-NAD(+). Residue T132 participates in ATP binding. Residue E137 participates in Mg(2+) binding. ATP-binding residues include K161 and S183.

It belongs to the NAD synthetase family. In terms of assembly, homodimer.

The enzyme catalyses deamido-NAD(+) + NH4(+) + ATP = AMP + diphosphate + NAD(+) + H(+). The protein operates within cofactor biosynthesis; NAD(+) biosynthesis; NAD(+) from deamido-NAD(+) (ammonia route): step 1/1. Catalyzes the ATP-dependent amidation of deamido-NAD to form NAD. Uses ammonia as a nitrogen source. This is NH(3)-dependent NAD(+) synthetase from Helicobacter acinonychis (strain Sheeba).